The chain runs to 343 residues: Cytosolic Fe-S cluster assembly factor CFD1 (343 aa).

15-22 (GKGGVGKS) provides a ligand contact to ATP. Composition is skewed to polar residues over residues 80–91 (PSSDGLNGSQRA) and 99–110 (ESSSSTVETAPQ). Residues 80–110 (PSSDGLNGSQRANKPDDSNESSSSTVETAPQ) form a disordered region. Cysteine 241 and cysteine 244 together coordinate [4Fe-4S] cluster.

The protein belongs to the Mrp/NBP35 ATP-binding proteins family. NUBP2/CFD1 subfamily. Heterotetramer of 2 NBP35 and 2 CFD1 chains. The cofactor is [4Fe-4S] cluster.

The protein resides in the cytoplasm. Component of the cytosolic iron-sulfur (Fe/S) protein assembly (CIA) machinery. Required for maturation of extramitochondrial Fe-S proteins. The NBP35-CFD1 heterotetramer forms a Fe-S scaffold complex, mediating the de novo assembly of an Fe-S cluster and its transfer to target apoproteins. The protein is Cytosolic Fe-S cluster assembly factor CFD1 of Coccidioides immitis (strain RS) (Valley fever fungus).